A 90-amino-acid chain; its full sequence is MAEQRLPPKIQYLKLKRTEELNNKLKKELARERITASNACLSIIDYTSTNKDYAVPEVWGYMKPGENHFRASAKQARPRGGHEGSCCCIM.

Cys-86 carries S-palmitoyl cysteine lipidation. Residue Cys-87 is modified to Cysteine methyl ester. Cys-87 carries S-farnesyl cysteine lipidation. Residues 88–90 (CIM) constitute a propeptide, removed in mature form.

It belongs to the G protein gamma family. In terms of assembly, g proteins are composed of 3 units, alpha, beta and gamma.

It is found in the membrane. The chain is Guanine nucleotide-binding protein subunit gamma from Eremothecium gossypii (strain ATCC 10895 / CBS 109.51 / FGSC 9923 / NRRL Y-1056) (Yeast).